The following is a 565-amino-acid chain: Phosphatidylinositol 4-kinase gamma 4 (565 aa).

Ubiquitin-like domains lie at 32–104 and 109–187; these read IVIF…LVVR and RAIS…RPAK. In terms of domain architecture, PI3K/PI4K catalytic spans 257–542; that stretch reads GYLPVMSTEG…AILPGTSEET (286 aa). A G-loop region spans residues 263–269; that stretch reads STEGSGG. Residues 264–270 and Lys286 each bind ATP; that span reads TEGSGGV. The segment at 291–311 is disordered; that stretch reads EPMAKNNPRGLPLSTDGEGLK. 369-372 lines the ATP pocket; that stretch reads QLFV. Residues 402 to 410 are catalytic loop; that stretch reads ANADRHAGN. Residues 425–451 are activation loop; the sequence is PIDHGYCLPEKFEDCTFEWLYWPQARE. Asp427 provides a ligand contact to ATP.

This sequence belongs to the PI3/PI4-kinase family. Type II PI4K subfamily. As to quaternary structure, interacts with FTIP1 and RPN10. In terms of tissue distribution, specifically expressed in the phloem including companion cells.

The protein localises to the nucleus. It is found in the endoplasmic reticulum. The catalysed reaction is a 1,2-diacyl-sn-glycero-3-phospho-(1D-myo-inositol) + ATP = a 1,2-diacyl-sn-glycero-3-phospho-(1D-myo-inositol 4-phosphate) + ADP + H(+). In terms of biological role, the phosphorylation of phosphatidylinositol (PI) to PI4P is the first committed step in the generation of phosphatidylinositol 4,5-bisphosphate (PIP2), a precursor of the second messenger inositol 1,4,5-trisphosphate (InsP3). Involved in the control of flowering under long day conditions by promoting degradation of FTIP1. Recruits FTIP1 for degradation by the 26S proteasome in leaves, which affects RFT1 transport to the shoot apical meristem (SAM). This is Phosphatidylinositol 4-kinase gamma 4 from Oryza sativa subsp. japonica (Rice).